We begin with the raw amino-acid sequence, 314 residues long: Olfactory receptor 1E2 (314 aa).

Topologically, residues 1–25 (MMGQNQTSISDFLLLGLPIQPEQQN) are extracellular. Asn-5 carries an N-linked (GlcNAc...) asparagine glycan. Residues 26–49 (LCYALFLAMYLTTLLGNLLIIVLI) traverse the membrane as a helical segment. Residues 50–57 (RLDSHLHT) lie on the Cytoplasmic side of the membrane. Residues 58-79 (PMYLFLSNLSFSDLCFSSVTIP) form a helical membrane-spanning segment. Topologically, residues 80 to 100 (KLLQNMQNQDPSIPYADCLTQ) are extracellular. A disulfide bridge links Cys-97 with Cys-189. Residues 101–120 (MYFFLLFGDLESFLLVAMAY) form a helical membrane-spanning segment. Residues 121–139 (DRYVAICFPLHYTAIMSPM) are Cytoplasmic-facing. A helical membrane pass occupies residues 140–158 (LCLSLVALSWVLTTFHAML). The Extracellular segment spans residues 159–195 (HTLLMARLCFCADNVIPHFFCDMSALLKLACSDTRVN). Residues 196–219 (EWVIFIMGGLIVVIPFLLILGSYA) form a helical membrane-spanning segment. Residues 220 to 236 (RIVSSILKVPSSKGICK) are Cytoplasmic-facing. Residues 237–259 (AFSTCGSHLSVVSLFYGTIIGLY) form a helical membrane-spanning segment. Residues 260–272 (LCPSANSSTLKET) are Extracellular-facing. An N-linked (GlcNAc...) asparagine glycan is attached at Asn-265. A helical membrane pass occupies residues 273-292 (VMAMMYTVVTPMLNPFIYSL). Over 293 to 314 (RNRDMKGALERVICKRKNPFLL) the chain is Cytoplasmic.

It belongs to the G-protein coupled receptor 1 family.

It localises to the cell membrane. Functionally, odorant receptor. This Gorilla gorilla gorilla (Western lowland gorilla) protein is Olfactory receptor 1E2 (OR1E2).